Reading from the N-terminus, the 511-residue chain is MEELQGYLEKDRSRQQHFLYPLLFQEYIYAFAHDHGLNDSIFYEPVEIVGYDNKSSSVLVKRLIIRMYQQNYLINSVNYSNQNRFVGHNTYFYSHFFSQMISESFAVIVEIPFSLRLVSFPEEKEIPKCQNLRSIHSIFPFLEDKLSHLNYVSDILIPYPIHLEILVQILQCRIQDVPSLHLLRFLLHEYHNWNSLITPKKSIYVFSKENKRLFWFLYNSYVSECEFVFVFLRKQSSYLRLTSSGTFLERIQFYGKIEHLIVVYRNYFQKTLWFFTDPFMHYVRYQGKAILASKGTHLLMKKWKCYLVNLWQYYFHFWSQPHRIHINQLSNYSFYFLGYLSSVLRNPLVVRNQMLENSFLIETGIKKFDTIVPVIPLIGSLSKAKFCTVSGHPISKPVWTDLSDCDIIDRFGRICRNLSHYHSGSSKKQSLYRIKYILRLSCARTLARKHKSTVRSFLQRLGSVLLEEFFTEEEQVLSLIFPKPTPFSLHGSRRERIWYLDIIRINNLVNH.

It belongs to the intron maturase 2 family. MatK subfamily.

The protein localises to the plastid. The protein resides in the chloroplast. Functionally, usually encoded in the trnK tRNA gene intron. Probably assists in splicing its own and other chloroplast group II introns. The polypeptide is Maturase K (Bromelia plumieri (Karatas)).